The sequence spans 333 residues: S-adenosylmethionine decarboxylase proenzyme (333 aa).

F7 contributes to the substrate binding site. Active-site residues include E8 and E11. E67 contacts substrate. Residue S68 is the Schiff-base intermediate with substrate; via pyruvic acid of the active site. Position 68 is a pyruvic acid (Ser); by autocatalysis (S68). C82 (proton donor; for catalytic activity) is an active-site residue. F223 contacts substrate. Residues S229 and H243 each act as proton acceptor; for processing activity in the active site. E247 contributes to the substrate binding site. At S298 the chain carries Phosphoserine.

This sequence belongs to the eukaryotic AdoMetDC family. Heterotetramer of two alpha and two beta chains. Pyruvate is required as a cofactor. Post-translationally, is synthesized initially as an inactive proenzyme. Formation of the active enzyme involves a self-maturation process in which the active site pyruvoyl group is generated from an internal serine residue via an autocatalytic post-translational modification. Two non-identical subunits are generated from the proenzyme in this reaction, and the pyruvate is formed at the N-terminus of the alpha chain, which is derived from the carboxyl end of the proenzyme. The post-translation cleavage follows an unusual pathway, termed non-hydrolytic serinolysis, in which the side chain hydroxyl group of the serine supplies its oxygen atom to form the C-terminus of the beta chain, while the remainder of the serine residue undergoes an oxidative deamination to produce ammonia and the pyruvoyl group blocking the N-terminus of the alpha chain.

The enzyme catalyses S-adenosyl-L-methionine + H(+) = S-adenosyl 3-(methylsulfanyl)propylamine + CO2. It participates in amine and polyamine biosynthesis; S-adenosylmethioninamine biosynthesis; S-adenosylmethioninamine from S-adenosyl-L-methionine: step 1/1. In terms of biological role, essential for biosynthesis of the polyamines spermidine and spermine. Promotes maintenance and self-renewal of embryonic stem cells, by maintaining spermine levels. This is S-adenosylmethionine decarboxylase proenzyme (Amd1) from Rattus norvegicus (Rat).